The following is a 465-amino-acid chain: ATP synthase subunit beta (465 aa).

152–159 (GGAGVGKT) contacts ATP.

The protein belongs to the ATPase alpha/beta chains family. As to quaternary structure, F-type ATPases have 2 components, CF(1) - the catalytic core - and CF(0) - the membrane proton channel. CF(1) has five subunits: alpha(3), beta(3), gamma(1), delta(1), epsilon(1). CF(0) has three main subunits: a(1), b(2) and c(9-12). The alpha and beta chains form an alternating ring which encloses part of the gamma chain. CF(1) is attached to CF(0) by a central stalk formed by the gamma and epsilon chains, while a peripheral stalk is formed by the delta and b chains.

The protein localises to the cell inner membrane. The catalysed reaction is ATP + H2O + 4 H(+)(in) = ADP + phosphate + 5 H(+)(out). Produces ATP from ADP in the presence of a proton gradient across the membrane. The catalytic sites are hosted primarily by the beta subunits. This is ATP synthase subunit beta from Campylobacter jejuni subsp. jejuni serotype O:6 (strain 81116 / NCTC 11828).